Reading from the N-terminus, the 81-residue chain is Small ribosomal subunit protein uS15 (81 aa).

It belongs to the universal ribosomal protein uS15 family. Part of the 30S ribosomal subunit. Forms a bridge to the 50S subunit in the 70S ribosome, contacting the 23S rRNA.

One of the primary rRNA binding proteins, it binds directly to 16S rRNA where it helps nucleate assembly of the platform of the 30S subunit by binding and bridging several RNA helices of the 16S rRNA. Functionally, forms an intersubunit bridge (bridge B4) with the 23S rRNA of the 50S subunit in the ribosome. In Mesomycoplasma hyorhinis (Mycoplasma hyorhinis), this protein is Small ribosomal subunit protein uS15.